The sequence spans 527 residues: Protein IQ-DOMAIN 4 (527 aa).

Positions 13–90 (CLSPGKDKKN…PPSPPPPPPA (78 aa)) are disordered. A compositionally biased stretch (basic and acidic residues) spans 17-26 (GKDKKNQKPE). Positions 63–90 (PYPPPPPLPDFAPQPLLPPPSPPPPPPA) are enriched in pro residues. An IQ domain is found at 147–175 (EETAAIKIQNAYRCYTARRTLRALRGMAR). The segment at 256–273 (RSVNRKEASVRRERALAY) is calmodulin-binding. The segment at 323 to 527 (VSVKSSLKRE…EKKRRNGGSS (205 aa)) is disordered. The segment covering 335–360 (IKSSPARSKTQKSASQSSIQWPVNND) has biased composition (polar residues). Residues 361 to 370 (TKSRKIEVTN) are compositionally biased toward basic and acidic residues. Composition is skewed to polar residues over residues 399-422 (LDNT…NAQT) and 437-455 (NTKT…NLAN). Residues 471-481 (PKKEVVADKKK) show a composition bias toward basic and acidic residues. Positions 478–485 (DKKKPPQM) match the Nuclear localization signal motif.

The protein belongs to the IQD family. As to quaternary structure, binds to multiple calmodulin (CaM) in the presence of Ca(2+) and CaM-like proteins.

The protein resides in the nucleus. The protein localises to the nucleolus. In terms of biological role, may be involved in cooperative interactions with calmodulins or calmodulin-like proteins. Recruits calmodulin proteins to microtubules, thus being a potential scaffold in cellular signaling and trafficking. May associate with nucleic acids and regulate gene expression at the transcriptional or post-transcriptional level. The polypeptide is Protein IQ-DOMAIN 4 (Arabidopsis thaliana (Mouse-ear cress)).